The sequence spans 427 residues: Homeotic protein caudal (427 aa).

Residues 104-273 (QLMQQHHHHH…QPQPGKTRTK (170 aa)) are disordered. Over residues 116 to 129 (ASSSSASSGSSSSG) the composition is skewed to low complexity. A compositionally biased stretch (gly residues) spans 145–164 (GVGGAGGGGGVGGATDGGPG). The segment covering 183–195 (ITVSGSEISSPGA) has biased composition (polar residues). A compositionally biased stretch (low complexity) spans 209-243 (HLSAVANNNNNNNNNNNSPSTHNNNNNNNSVSNNN). Phosphothreonine is present on T245. An Antp-type hexapeptide motif is present at residues 252-257 (YFDWMK). The homeobox DNA-binding region spans 273–332 (KDKYRVVYTDFQRLELEKEYCTSRYITIRRKSELAQTLSLSERQVKIWFQNRRAKERKQN).

The protein belongs to the Caudal homeobox family. As to expression, maternally localized in an anteroposterior gradient in the syncytial blastoderm. Also expressed in the pole cells. Zygotically localized in the primordia of the terminal abdominal segment, the hindgut and in the posterior midgut rudiment. Expressed in the gut, the gonads and parts of the genital disks of third instar larvae (at protein level).

It localises to the nucleus. Functionally, caudal (cad) is one of a number of transcription factors controlling segmentation of the embryo. Further transcriptional regulation via a 5' flanking region containing DNA replication-related elements (DRE) and by dref also regulated by trh and tgo via the CNS midline element. Alongside Bicoid (bcd), caudal forms concentration gradients down the anterior-posterior (A-P) axis providing positional information and subsequent induction of the gap genes. Plays a role in gastrulation/germ band extension, hindgut morphogenesis, positive regulation of cell proliferation, genital disk development and pattern formation. Acts as a key regulator of the Hox gene network and activates transcription via the downstream core promoter element (DPE) relative to the TATA box. Plays a role in the establishment of the hindgut and in the invagination of the hindgut primordium during gastrulation. These effects on the gut are achieved by acting combinatorially at the posterior of the embryo to activate transcription of different targets including fog, fkh and wg. Caudal is involved in regulation of proliferation through transactivation of the E2F gene. Postembryonically its function is mostly restricted to the intestine where it regulates antimicrobial peptide (AMP) levels preserving the normal gut flora. The sequence is that of Homeotic protein caudal (cad) from Drosophila melanogaster (Fruit fly).